The following is a 329-amino-acid chain: N-acetyl-gamma-glutamyl-phosphate reductase (329 aa).

Residue C155 is part of the active site.

This sequence belongs to the NAGSA dehydrogenase family. Type 1 subfamily.

The protein localises to the cytoplasm. The catalysed reaction is N-acetyl-L-glutamate 5-semialdehyde + phosphate + NADP(+) = N-acetyl-L-glutamyl 5-phosphate + NADPH + H(+). It participates in amino-acid biosynthesis; L-arginine biosynthesis; N(2)-acetyl-L-ornithine from L-glutamate: step 3/4. Its function is as follows. Catalyzes the NADPH-dependent reduction of N-acetyl-5-glutamyl phosphate to yield N-acetyl-L-glutamate 5-semialdehyde. In Shewanella pealeana (strain ATCC 700345 / ANG-SQ1), this protein is N-acetyl-gamma-glutamyl-phosphate reductase.